Reading from the N-terminus, the 354-residue chain is Uroporphyrinogen decarboxylase (354 aa).

Substrate is bound by residues 27–31 (RQAGR), Asp77, Tyr154, Thr209, and His327.

The protein belongs to the uroporphyrinogen decarboxylase family. Homodimer.

It localises to the cytoplasm. The catalysed reaction is uroporphyrinogen III + 4 H(+) = coproporphyrinogen III + 4 CO2. The protein operates within porphyrin-containing compound metabolism; protoporphyrin-IX biosynthesis; coproporphyrinogen-III from 5-aminolevulinate: step 4/4. In terms of biological role, catalyzes the decarboxylation of four acetate groups of uroporphyrinogen-III to yield coproporphyrinogen-III. The protein is Uroporphyrinogen decarboxylase of Escherichia coli O6:K15:H31 (strain 536 / UPEC).